Reading from the N-terminus, the 186-residue chain is UPF0397 protein LCABL_04350 (186 aa).

Helical transmembrane passes span 12 to 32 (VVAIGIGTAILFILKRFAVIP), 45 to 65 (GFLGFIATLFGPIAGFFIGFL), 77 to 97 (TPWWTWVFTTGLVGMVIGLFW), 112 to 132 (IVSFNLLQIITNVVSWSLIAP), and 150 to 170 (GIVSAISNSIATGVIGTILLV).

It belongs to the UPF0397 family.

It is found in the cell membrane. The chain is UPF0397 protein LCABL_04350 from Lacticaseibacillus casei (strain BL23) (Lactobacillus casei).